Consider the following 935-residue polypeptide: C-1-tetrahydrofolate synthase, cytoplasmic (935 aa).

Methionine 1 carries the post-translational modification N-acetylmethionine. A methylenetetrahydrofolate dehydrogenase and methenyltetrahydrofolate cyclohydrolase (D/C) domain region spans residues alanine 2–alanine 291. Residues tyrosine 52–lysine 56 and valine 99–leucine 101 contribute to the substrate site. The active site involves lysine 56. NADP(+)-binding positions include glycine 172–serine 174 and serine 197. Residue proline 272–glycine 276 participates in substrate binding. The formyltetrahydrofolate synthetase domain stretch occupies residues leucine 310–phenylalanine 935. The residue at position 318 (serine 318) is a Phosphoserine. Threonine 380 to serine 387 provides a ligand contact to ATP. Serine 413 and serine 490 each carry phosphoserine.

This sequence in the N-terminal section; belongs to the tetrahydrofolate dehydrogenase/cyclohydrolase family. It in the C-terminal section; belongs to the formate--tetrahydrofolate ligase family. Homodimer. As to expression, ubiquitous.

The protein localises to the cytoplasm. It carries out the reaction (6R)-5,10-methylene-5,6,7,8-tetrahydrofolate + NADP(+) = (6R)-5,10-methenyltetrahydrofolate + NADPH. The enzyme catalyses (6R)-5,10-methenyltetrahydrofolate + H2O = (6R)-10-formyltetrahydrofolate + H(+). It catalyses the reaction (6S)-5,6,7,8-tetrahydrofolate + formate + ATP = (6R)-10-formyltetrahydrofolate + ADP + phosphate. Its pathway is one-carbon metabolism; tetrahydrofolate interconversion. Trifunctional enzyme that catalyzes the interconversion of three forms of one-carbon-substituted tetrahydrofolate: (6R)-5,10-methylene-5,6,7,8-tetrahydrofolate, 5,10-methenyltetrahydrofolate and (6S)-10-formyltetrahydrofolate. These derivatives of tetrahydrofolate are differentially required in nucleotide and amino acid biosynthesis, (6S)-10-formyltetrahydrofolate being required for purine biosynthesis while (6R)-5,10-methylene-5,6,7,8-tetrahydrofolate is used for serine and methionine biosynthesis for instance. This Homo sapiens (Human) protein is C-1-tetrahydrofolate synthase, cytoplasmic (MTHFD1).